Reading from the N-terminus, the 94-residue chain is DNA-binding protein HU (94 aa).

The tract at residues 56–94 (QKGKEGKVPGSDKTYKTEDKRVPKFKPGKTLKQKVEEGK) is disordered. Basic and acidic residues predominate over residues 68–77 (KTYKTEDKRV). Over residues 78-87 (PKFKPGKTLK) the composition is skewed to basic residues.

The protein belongs to the bacterial histone-like protein family. In terms of assembly, homodimer.

Its function is as follows. Histone-like DNA-binding protein which is capable of wrapping DNA to stabilize it, and thus to prevent its denaturation under extreme environmental conditions. This Helicobacter pylori (strain ATCC 700392 / 26695) (Campylobacter pylori) protein is DNA-binding protein HU (hup).